Here is a 3412-residue protein sequence, read N- to C-terminus: Genome polyprotein (3412 aa).

Topologically, residues 1–104 (MSGRKAQGKT…LSSRKRRSSE (104 aa)) are cytoplasmic. Residues 38-72 (PGPSRGVQGFIFFFLFNILTGKKLTTHLKRLWRML) are hydrophobic; homodimerization of capsid protein C. Positions 102-121 (SSEMTMMPLLILSMVILGGG) are cleaved as a propeptide — ER anchor for the capsid protein C, removed in mature form by serine protease NS3. A helical membrane pass occupies residues 105–125 (MTMMPLLILSMVILGGGVTLV). Over 126–244 (RKNRWLLLNV…GERQLQKIER (119 aa)) the chain is Extracellular. 2 N-linked (GlcNAc...) asparagine; by host glycosylation sites follow: Asn134 and Asn150. The helical transmembrane segment at 245 to 265 (WLVRNPFFAVTALAIAYLVGN) threads the bilayer. Residues 266 to 270 (NKTQR) are Cytoplasmic-facing. Residues 271–285 (VVIALLVLAVGPAYS) form a helical membrane-spanning segment. The Extracellular portion of the chain corresponds to 286–730 (AHCIGITDRD…TVFGSAFQGL (445 aa)). 8 disulfides stabilise this stretch: Cys288/Cys315, Cys345/Cys401, Cys345/Cys406, Cys359/Cys390, Cys377/Cys401, Cys377/Cys406, Cys467/Cys568, and Cys585/Cys615. The tract at residues 383–396 (DRGWGNGCGLFGKG) is fusion peptide. Residues 731 to 751 (FGGLSWITKVIMGAVLIWVGI) traverse the membrane as a helical segment. Over 752–757 (NTRNMT) the chain is Extracellular. The chain crosses the membrane as a helical span at residues 758 to 778 (MSMSMILVGVIMMFLSLGVGA). Over 779-1132 (DQGCAVNFGK…LVRSWVTAGE (354 aa)) the chain is Extracellular. Disulfide bonds link Cys782/Cys793, Cys833/Cys921, Cys957/Cys1002, Cys1058/Cys1107, Cys1069/Cys1091, and Cys1090/Cys1094. N-linked (GlcNAc...) asparagine; by host glycans are attached at residues Asn908 and Asn986. Residues 1133–1153 (VHAVPFGLVSMMIAMEVVLRK) form a helical membrane-spanning segment. The Cytoplasmic segment spans residues 1154–1201 (RQGPKQMLVGGIILLGAMLVGQVTMLDLVKLIVAVGLHFHEINNGGDA). A helical transmembrane segment spans residues 1202–1222 (MYMALIASFSIRPGLLIGFGL). Residues 1223–1287 (RTLWSPRERL…ILPLMALLTP (65 aa)) lie on the Lumenal side of the membrane. Residues 1288–1308 (VTMYEVRMATMLFCTVVIVGV) traverse the membrane as a helical segment. The Cytoplasmic portion of the chain corresponds to 1309 to 1355 (LHQNSKDTSMQKTIPIVALTLTSYMGLTQPFLGLCAYMSTQVFGRRS). A helical membrane pass occupies residues 1356–1376 (IPVNEALAAAGLVGVLAGLAF). Topologically, residues 1377 to 1378 (QD) are lumenal. A helical transmembrane segment spans residues 1379–1399 (MENFLGPIAVGGILMMLVSVA). Residues 1400-1456 (GKVDGLELKKLGEVSWEEEAEISGSSSRYDVALSEQGEFKLLSEDKVPWDQIVMTSL) are Cytoplasmic-facing. An interacts with and activates NS3 protease region spans residues 1407–1446 (LKKLGEVSWEEEAEISGSSSRYDVALSEQGEFKLLSEDKV). Positions 1457 to 1477 (ALVGAAIHPFALLLVLGGWVL) form an intramembrane region, helical. Residues 1478–2157 (HIKGARRSGD…RNALSMMPEA (680 aa)) lie on the Cytoplasmic side of the membrane. In terms of domain architecture, Peptidase S7 spans 1485–1665 (SGDVLWDIPT…EVKEESKEEL (181 aa)). Active-site charge relay system; for serine protease NS3 activity residues include His1537, Asp1561, and Ser1622. One can recognise a Helicase ATP-binding domain in the interval 1669–1825 (PTMLKKGMTT…HSNGEIEDVQ (157 aa)). Residues 1673-1676 (KKGM) form an important for RNA-binding region. 1682–1689 (FHPGAGKT) is a binding site for ATP. The DEAH box signature appears at 1773-1776 (DEAH). A Helicase C-terminal domain is found at 1820-1997 (EIEDVQTDIP…VRGGMVAPLY (178 aa)). N6-acetyllysine; by host is present on Lys1877. The interval 1942–1961 (AAQRRGRIGRNPNRDGDSYY) is disordered. The chain crosses the membrane as a helical span at residues 2158–2178 (MTIVMLFILAGLLTSGMVIFF). The Lumenal segment spans residues 2179-2186 (MSPKGMSR). An intramembrane region (helical) is located at residues 2187-2207 (MSMAMGTMAGSGYLMFLGGVK). Residues 2208-2209 (PT) lie on the Lumenal side of the membrane. Residues 2210-2230 (HISYVMLIFFVLMVVIIPEPG) form a helical membrane-spanning segment. At 2231-2241 (QQRSIQDNQVA) the chain is on the cytoplasmic side. Residues 2242-2262 (YLIIGILTLLSVVAANELGML) form a helical membrane-spanning segment. Residues 2263–2293 (EKTKEDFFGKRNIATSGGTIPWSWPDLDLKP) are Lumenal-facing. An intramembrane region (helical) is located at residues 2294–2314 (GAAWTVYVGIVTMLSPMLHHW). Residues 2315–2360 (IKVEYGNLSLSGIAQSASVLSFMDKGVPFMKMNISVVILLVSGWNS) are Lumenal-facing. Residues 2361–2380 (ITVIPLLCGVGGAMLHWTLI) traverse the membrane as a helical segment. Residues 2381–2421 (LPGIKAQQSKLAQKRVFHGVAKNPVVDGNPTADIEEAPEMP) are Cytoplasmic-facing. A helical transmembrane segment spans residues 2422 to 2442 (ALYEKKLALYLLLALSLMSVA). Over 2443–2445 (MCR) the chain is Lumenal. The helical transmembrane segment at 2446–2466 (TPFSLAEGIVLSSAALGPLIE) threads the bilayer. The Cytoplasmic segment spans residues 2467–3411 (GNTSLLWNGP…VDADLQPGEL (945 aa)). The region spanning 2508-2772 (GSANGKTLGE…DVILPIGTRS (265 aa)) is the mRNA cap 0-1 NS5-type MT domain. Ser2563 is an S-adenosyl-L-methionine binding site. Ser2563 carries the post-translational modification Phosphoserine. Lys2568 serves as the catalytic For 2'-O-MTase activity. Residues Gly2593, Trp2594, Thr2611, Leu2612, Asp2638, and Ile2639 each coordinate S-adenosyl-L-methionine. Asp2653 functions as the For 2'-O-MTase activity in the catalytic mechanism. Ile2654 is a binding site for S-adenosyl-L-methionine. Catalysis depends on for 2'-O-MTase activity residues Lys2689 and Glu2725. Residue Tyr2727 coordinates S-adenosyl-L-methionine. Positions 2879 to 2912 (RKIMRVVNRWLFRHLAREKKPRLCTKEEFIAKVR) match the Nuclear localization signal motif. Zn(2+)-binding residues include Glu2946, His2950, Cys2955, and Cys2958. The RdRp catalytic domain maps to 3036 to 3188 (GGFYADDTAG…KPVDDRFGLA (153 aa)). Residues His3223, Cys3239, and Cys3358 each contribute to the Zn(2+) site.

This sequence in the N-terminal section; belongs to the class I-like SAM-binding methyltransferase superfamily. mRNA cap 0-1 NS5-type methyltransferase family. In terms of assembly, homodimer. Interacts (via N-terminus) with host EXOC1 (via C-terminus); this interaction results in EXOC1 degradation through the proteasome degradation pathway. As to quaternary structure, forms heterodimers with envelope protein E in the endoplasmic reticulum and Golgi. Homodimer; in the endoplasmic reticulum and Golgi. Interacts with protein prM. Interacts with non-structural protein 1. In terms of assembly, homodimer; Homohexamer when secreted. Interacts with envelope protein E. As to quaternary structure, interacts (via N-terminus) with serine protease NS3. Forms a heterodimer with serine protease NS3. May form homooligomers. In terms of assembly, forms a heterodimer with NS2B. Interacts with non-structural protein 2A (via N-terminus). Interacts with NS4B. Interacts with unphosphorylated RNA-directed RNA polymerase NS5; this interaction stimulates RNA-directed RNA polymerase NS5 guanylyltransferase activity. NS3 interacts with host PDCD6IP; this interaction contributes to virion release. As to quaternary structure, interacts with serine protease NS3. Homodimer. Interacts with host STAT2; this interaction prevents the establishment of cellular antiviral state. Interacts with serine protease NS3. Interacts with host TRIM23; this interaction leads to NS5 ubiquitination. Post-translationally, specific enzymatic cleavages in vivo yield mature proteins. The nascent capsid protein C contains a C-terminal hydrophobic domain that act as a signal sequence for translocation of prM into the lumen of the ER. Mature capsid protein C is cleaved at a site upstream of this hydrophobic domain by NS3. prM is cleaved in post-Golgi vesicles by a host furin, releasing the mature small envelope protein M, and peptide pr. Non-structural protein 2A-alpha, a C-terminally truncated form of non-structural protein 2A, results from partial cleavage by NS3. Specific enzymatic cleavages in vivo yield mature proteins peptide 2K acts as a signal sequence and is removed from the N-terminus of NS4B by the host signal peptidase in the ER lumen. Signal cleavage at the 2K-4B site requires a prior NS3 protease-mediated cleavage at the 4A-2K site. In terms of processing, cleaved in post-Golgi vesicles by a host furin, releasing the mature small envelope protein M, and peptide pr. This cleavage is incomplete as up to 30% of viral particles still carry uncleaved prM. N-glycosylated. Post-translationally, N-glycosylated. The excreted form is glycosylated and this is required for efficient secretion of the protein from infected cells. In terms of processing, polyubiquitinated; ubiquitination is probably mediated by host TRIM23 and is prerequisite for NS5-STAT2 interaction. NS5 is not ISGylated or sumoylated. Acetylated by host KAT5. Acetylation modulates NS3 RNA-binding and unwinding activities and plays an important positive role for viral replication. Post-translationally, phosphorylated on serines residues. This phosphorylation may trigger NS5 nuclear localization.

Its subcellular location is the virion. The protein resides in the host nucleus. The protein localises to the host cytoplasm. It is found in the host perinuclear region. It localises to the secreted. Its subcellular location is the virion membrane. The protein resides in the host endoplasmic reticulum membrane. It carries out the reaction Selective hydrolysis of -Xaa-Xaa-|-Yaa- bonds in which each of the Xaa can be either Arg or Lys and Yaa can be either Ser or Ala.. It catalyses the reaction RNA(n) + a ribonucleoside 5'-triphosphate = RNA(n+1) + diphosphate. The enzyme catalyses a ribonucleoside 5'-triphosphate + H2O = a ribonucleoside 5'-diphosphate + phosphate + H(+). The catalysed reaction is ATP + H2O = ADP + phosphate + H(+). It carries out the reaction a 5'-end (5'-triphosphoguanosine)-ribonucleoside in mRNA + S-adenosyl-L-methionine = a 5'-end (N(7)-methyl 5'-triphosphoguanosine)-ribonucleoside in mRNA + S-adenosyl-L-homocysteine. It catalyses the reaction a 5'-end (N(7)-methyl 5'-triphosphoguanosine)-ribonucleoside in mRNA + S-adenosyl-L-methionine = a 5'-end (N(7)-methyl 5'-triphosphoguanosine)-(2'-O-methyl-ribonucleoside) in mRNA + S-adenosyl-L-homocysteine + H(+). Its function is as follows. Plays a role in virus budding by binding to the cell membrane and gathering the viral RNA into a nucleocapsid that forms the core of a mature virus particle. During virus entry, may induce genome penetration into the host cytoplasm after hemifusion induced by the surface proteins. Can migrate to the cell nucleus where it modulates host functions. Functionally, inhibits RNA silencing by interfering with host Dicer. Prevents premature fusion activity of envelope proteins in trans-Golgi by binding to envelope protein E at pH6.0. After virion release in extracellular space, gets dissociated from E dimers. In terms of biological role, acts as a chaperone for envelope protein E during intracellular virion assembly by masking and inactivating envelope protein E fusion peptide. prM is the only viral peptide matured by host furin in the trans-Golgi network probably to avoid catastrophic activation of the viral fusion activity in acidic Golgi compartment prior to virion release. prM-E cleavage is inefficient, and many virions are only partially matured. These uncleaved prM would play a role in immune evasion. Its function is as follows. May play a role in virus budding. Exerts cytotoxic effects by activating a mitochondrial apoptotic pathway through M ectodomain. May display a viroporin activity. Functionally, binds to host cell surface receptor and mediates fusion between viral and cellular membranes. Envelope protein is synthesized in the endoplasmic reticulum in the form of heterodimer with protein prM. They play a role in virion budding in the ER, and the newly formed immature particle is covered with 60 spikes composed of heterodimer between precursor prM and envelope protein E. The virion is transported to the Golgi apparatus where the low pH causes dissociation of PrM-E heterodimers and formation of E homodimers. prM-E cleavage is inefficient, and many virions are only partially matured. These uncleaved prM would play a role in immune evasion. Involved in immune evasion, pathogenesis and viral replication. Once cleaved off the polyprotein, is targeted to three destinations: the viral replication cycle, the plasma membrane and the extracellular compartment. Essential for viral replication. Required for formation of the replication complex and recruitment of other non-structural proteins to the ER-derived membrane structures. Excreted as a hexameric lipoparticle that plays a role against host immune response. Antagonizing the complement function. Binds to the host macrophages and dendritic cells. Inhibits signal transduction originating from Toll-like receptor 3 (TLR3). In terms of biological role, component of the viral RNA replication complex that functions in virion assembly and antagonizes the host immune response. Its function is as follows. Required cofactor for the serine protease function of NS3. May have membrane-destabilizing activity and form viroporins. Functionally, displays three enzymatic activities: serine protease, NTPase and RNA helicase. NS3 serine protease, in association with NS2B, performs its autocleavage and cleaves the polyprotein at dibasic sites in the cytoplasm: C-prM, NS2A-NS2B, NS2B-NS3, NS3-NS4A, NS4A-2K and NS4B-NS5. NS3 RNA helicase binds RNA and unwinds dsRNA in the 3' to 5' direction. Also plays a role in virus assembly. Regulates the ATPase activity of the NS3 helicase activity. NS4A allows NS3 helicase to conserve energy during unwinding. In terms of biological role, functions as a signal peptide for NS4B and is required for the interferon antagonism activity of the latter. Its function is as follows. Induces the formation of ER-derived membrane vesicles where the viral replication takes place. Inhibits interferon (IFN)-induced host STAT1 phosphorylation and nuclear translocation, thereby preventing the establishment of cellular antiviral state by blocking the IFN-alpha/beta pathway. Functionally, replicates the viral (+) and (-) RNA genome, and performs the capping of genomes in the cytoplasm. NS5 methylates viral RNA cap at guanine N-7 and ribose 2'-O positions. Besides its role in RNA genome replication, also prevents the establishment of cellular antiviral state by blocking the interferon-alpha/beta (IFN-alpha/beta) signaling pathway. IFN-I induces binding of NS5 to host IFN-activated transcription factor STAT2, preventing its transcriptional activity. Host TRIM23 is the E3 ligase that interacts with and polyubiquitinates NS5 to promote its binding to STAT2 and trigger IFN-I signaling inhibition. The sequence is that of Genome polyprotein from Yellow fever virus (isolate Uganda/A7094A4/1948) (YFV).